Consider the following 278-residue polypeptide: tRNA (guanine-N(7)-)-methyltransferase (278 aa).

S-adenosyl-L-methionine-binding positions include glycine 95, 118-119 (EI), 153-154 (NA), and cysteine 173. The active site involves aspartate 176. An S-adenosyl-L-methionine-binding site is contributed by 251–253 (TEE).

Belongs to the class I-like SAM-binding methyltransferase superfamily. TrmB family. As to quaternary structure, forms a complex with TRM82.

The protein resides in the nucleus. The catalysed reaction is guanosine(46) in tRNA + S-adenosyl-L-methionine = N(7)-methylguanosine(46) in tRNA + S-adenosyl-L-homocysteine. It participates in tRNA modification; N(7)-methylguanine-tRNA biosynthesis. Functionally, catalyzes the formation of N(7)-methylguanine at position 46 (m7G46) in tRNA. The chain is tRNA (guanine-N(7)-)-methyltransferase from Kluyveromyces lactis (strain ATCC 8585 / CBS 2359 / DSM 70799 / NBRC 1267 / NRRL Y-1140 / WM37) (Yeast).